The sequence spans 568 residues: MKTSQLFYKTSKNANKSAAVLSNELLEKAGYLFKVSKGVYTYTPLLWRVVSKMMNIIREELNAIGGQELLLPLLHNAELWQHTGRWEAFTSEGLLYTLKDREGKSHCLAPTHEEVICSFVAQWLSSKRQLPLHLYQIATKFRDEIRPRFGLIRSRELLMEDSYTFSDSPEQMNEQYEKLRSAYSKIFDRLGLAYVIVTADGGKIGKGKSEEFQVLCSLGEDTICVSGSYGANIEAAVSIPPQHAYDREFLPVEEVATPGITTIEALANFFSIPLHKILKTLVVKLSYSNEEKFIAIGMRGDRQVNLVKVASKLNADDIALASDEEIERVLGTEKGFIGPLNCPIDFFADETTSPMTNFVCAGNAKDKHYVNVNWDRDLLPPQYGDFLLAEEGDTCPENPGHPYRIYQGIEVAHIFNLGTRYTDSFEVNFQDEHGQTQQCWMGTYGIGVGRTLAACVEQLADDRGIVWPKALAPFSITIAFNGGDTVSQELAETIYHELQSQGYEPLLDDRDERLGFKLKDSDLIGIPYKLILGKSYQSSGIFEIESRSGEKYTVSPEAFPTWCQNHLA.

This sequence belongs to the class-II aminoacyl-tRNA synthetase family. ProS type 1 subfamily. Homodimer.

It localises to the cytoplasm. It catalyses the reaction tRNA(Pro) + L-proline + ATP = L-prolyl-tRNA(Pro) + AMP + diphosphate. In terms of biological role, catalyzes the attachment of proline to tRNA(Pro) in a two-step reaction: proline is first activated by ATP to form Pro-AMP and then transferred to the acceptor end of tRNA(Pro). As ProRS can inadvertently accommodate and process non-cognate amino acids such as alanine and cysteine, to avoid such errors it has two additional distinct editing activities against alanine. One activity is designated as 'pretransfer' editing and involves the tRNA(Pro)-independent hydrolysis of activated Ala-AMP. The other activity is designated 'posttransfer' editing and involves deacylation of mischarged Ala-tRNA(Pro). The misacylated Cys-tRNA(Pro) is not edited by ProRS. The chain is Proline--tRNA ligase from Chlamydia pneumoniae (Chlamydophila pneumoniae).